The primary structure comprises 1492 residues: Copper-transporting ATPase 1 (1492 aa).

Topologically, residues 1–645 are cytoplasmic; that stretch reads MEPNMDANSI…KREIKQWRGS (645 aa). HMA domains are found at residues 8–74 and 85–151; these read NSIT…FDAL and TNTV…LDMG. 3 residues coordinate Cu(+): Thr-18, Cys-19, and Cys-22. The residue at position 152 (Thr-152) is a Phosphothreonine. Residues 171–237 form the HMA 3 domain; the sequence is VLLKMRVEGM…QIEAVGFPAF (67 aa). Cu(+) contacts are provided by Cys-182 and Cys-185. A Phosphoserine modification is found at Ser-270. Positions 277-343 constitute an HMA 4 domain; that stretch reads SAITFTIDGM…AIEAVSPGQY (67 aa). 2 residues coordinate Cu(+): Cys-288 and Cys-291. Position 327 is a phosphothreonine (Thr-327). Phosphoserine is present on residues Ser-339, Ser-353, Ser-357, and Ser-362. HMA domains are found at residues 377 to 443, 480 to 546, and 556 to 622; these read QEVV…FDAV, NKCY…FGAV, and GILE…FEAS. The Cu(+) site is built by Cys-388, Cys-391, Cys-491, Cys-494, Cys-567, and Cys-570. A helical membrane pass occupies residues 646-667; the sequence is FLVSLFFCIPVMGLMIYMMVMD. The Extracellular portion of the chain corresponds to 668-706; it reads HHLATLNHNQNMSNEEMINMHSSMFLERQILPGLSIMNL. Asn-678 carries N-linked (GlcNAc...) asparagine glycosylation. The helical transmembrane segment at 707–726 threads the bilayer; it reads LSLLLCLPVQFCGGWYFYIQ. The Cytoplasmic segment spans residues 727–733; that stretch reads AYKALRH. The chain crosses the membrane as a helical span at residues 734–754; that stretch reads KTANMDVLIVLATTIAFAYSL. The Extracellular portion of the chain corresponds to 755 to 773; it reads VILLVAMYERAKVNPITFF. The chain crosses the membrane as a helical span at residues 774–794; sequence DTPPMLFVFIALGRWLEHIAK. The Cytoplasmic segment spans residues 795 to 927; it reads GKTSEALAKL…SKAPIQQFAD (133 aa). A helical transmembrane segment spans residues 928–951; the sequence is KLSGYFVPFIVLVSIVTLLVWIII. Topologically, residues 952 to 981 are extracellular; it reads GFQNFEIVEAYFPGYNRSISRTETIIRFAF. A helical transmembrane segment spans residues 982–1003; that stretch reads QASITVLCIACPCSLGLATPTA. Topologically, residues 1004-1348 are cytoplasmic; sequence VMVGTGVGAQ…LSRKTVKRIR (345 aa). The active-site 4-aspartylphosphate intermediate is the Asp-1036. Position 1073 (Glu-1073) interacts with ATP. Phosphothreonine is present on Thr-1204. 2 residues coordinate Mg(2+): Asp-1293 and Asp-1297. A helical transmembrane segment spans residues 1349-1366; that stretch reads INFVFALIYNLIGIPIAA. Residues 1367–1377 are Extracellular-facing; the sequence is GVFLPIGLVLQ. The chain crosses the membrane as a helical span at residues 1378 to 1397; the sequence is PWMGSAAMAASSVSVVLSSL. Topologically, residues 1398 to 1492 are cytoplasmic; it reads FLKLYRKPTY…DFREDDDTTL (95 aa). Phosphoserine is present on residues Ser-1422, Ser-1424, Ser-1452, Ser-1455, and Ser-1458. The Endocytosis signal signature appears at 1459 to 1460; that stretch reads LL. Ser-1461, Ser-1465, Ser-1468, and Ser-1478 each carry phosphoserine. The segment at 1478–1492 is PDZD11-binding; it reads SLLVGDFREDDDTTL. Positions 1479–1480 match the Endocytosis signal motif; that stretch reads LL.

It belongs to the cation transport ATPase (P-type) (TC 3.A.3) family. Type IB subfamily. Monomer. Interacts with PDZD11. Interacts with ATOX1 and COMMD1. Interacts with TYRP1. Directly interacts with SOD3; this interaction is copper-dependent and is required for SOD3 activity. As to expression, expressed in hippocampal neuron (at protein level). Expressed in anterior pituitary gland (at protein level).

Its subcellular location is the golgi apparatus. The protein resides in the trans-Golgi network membrane. It is found in the cell membrane. The protein localises to the melanosome membrane. It localises to the early endosome membrane. Its subcellular location is the cell projection. The protein resides in the axon. It is found in the dendrite. The protein localises to the postsynaptic density. The enzyme catalyses Cu(+)(in) + ATP + H2O = Cu(+)(out) + ADP + phosphate + H(+). Its function is as follows. ATP-driven copper (Cu(+)) ion pump that plays an important role in intracellular copper ion homeostasis. Within a catalytic cycle, acquires Cu(+) ion from donor protein on the cytoplasmic side of the membrane and delivers it to acceptor protein on the lumenal side. The transfer of Cu(+) ion across the membrane is coupled to ATP hydrolysis and is associated with a transient phosphorylation that shifts the pump conformation from inward-facing to outward-facing state. Under physiological conditions, at low cytosolic copper concentration, it is localized at the trans-Golgi network (TGN) where it transfers Cu(+) ions to cuproenzymes of the secretory pathway. Upon elevated cytosolic copper concentrations, it relocalizes to the plasma membrane where it is responsible for the export of excess Cu(+) ions. May play a dual role in neuron function and survival by regulating cooper efflux and neuronal transmission at the synapse as well as by supplying Cu(+) ions to enzymes such as PAM, TYR and SOD3. In the melanosomes of pigmented cells, provides copper cofactor to TYR to form an active TYR holoenzyme for melanin biosynthesis. In Rattus norvegicus (Rat), this protein is Copper-transporting ATPase 1.